Reading from the N-terminus, the 292-residue chain is 4-hydroxy-tetrahydrodipicolinate synthase (292 aa).

Position 45 (Thr45) interacts with pyruvate. Residue Tyr133 is the Proton donor/acceptor of the active site. Residue Lys162 is the Schiff-base intermediate with substrate of the active site. Pyruvate is bound at residue Ile204.

It belongs to the DapA family. Homotetramer; dimer of dimers.

The protein resides in the cytoplasm. It carries out the reaction L-aspartate 4-semialdehyde + pyruvate = (2S,4S)-4-hydroxy-2,3,4,5-tetrahydrodipicolinate + H2O + H(+). It functions in the pathway amino-acid biosynthesis; L-lysine biosynthesis via DAP pathway; (S)-tetrahydrodipicolinate from L-aspartate: step 3/4. Catalyzes the condensation of (S)-aspartate-beta-semialdehyde [(S)-ASA] and pyruvate to 4-hydroxy-tetrahydrodipicolinate (HTPA). In Maridesulfovibrio salexigens (strain ATCC 14822 / DSM 2638 / NCIMB 8403 / VKM B-1763) (Desulfovibrio salexigens), this protein is 4-hydroxy-tetrahydrodipicolinate synthase.